The primary structure comprises 273 residues: Bifunctional protein FolD (273 aa).

NADP(+)-binding positions include 152 to 154 (GRS), T179, and I220.

This sequence belongs to the tetrahydrofolate dehydrogenase/cyclohydrolase family. As to quaternary structure, homodimer.

The catalysed reaction is (6R)-5,10-methylene-5,6,7,8-tetrahydrofolate + NADP(+) = (6R)-5,10-methenyltetrahydrofolate + NADPH. It carries out the reaction (6R)-5,10-methenyltetrahydrofolate + H2O = (6R)-10-formyltetrahydrofolate + H(+). It participates in one-carbon metabolism; tetrahydrofolate interconversion. In terms of biological role, catalyzes the oxidation of 5,10-methylenetetrahydrofolate to 5,10-methenyltetrahydrofolate and then the hydrolysis of 5,10-methenyltetrahydrofolate to 10-formyltetrahydrofolate. This chain is Bifunctional protein FolD, found in Petrotoga mobilis (strain DSM 10674 / SJ95).